The chain runs to 447 residues: Probable glycine dehydrogenase (decarboxylating) subunit 1 (447 aa).

The protein belongs to the GcvP family. N-terminal subunit subfamily. In terms of assembly, the glycine cleavage system is composed of four proteins: P, T, L and H. In this organism, the P 'protein' is a heterodimer of two subunits.

It catalyses the reaction N(6)-[(R)-lipoyl]-L-lysyl-[glycine-cleavage complex H protein] + glycine + H(+) = N(6)-[(R)-S(8)-aminomethyldihydrolipoyl]-L-lysyl-[glycine-cleavage complex H protein] + CO2. Functionally, the glycine cleavage system catalyzes the degradation of glycine. The P protein binds the alpha-amino group of glycine through its pyridoxal phosphate cofactor; CO(2) is released and the remaining methylamine moiety is then transferred to the lipoamide cofactor of the H protein. This is Probable glycine dehydrogenase (decarboxylating) subunit 1 from Bacillus cereus (strain ATCC 10987 / NRS 248).